The following is a 2388-amino-acid chain: Highly reducing polyketide synthase Preu1 (2388 aa).

The 426-residue stretch at 7–432 (NDDIAIVGLA…GTNAHVILDD (426 aa)) folds into the Ketosynthase family 3 (KS3) domain. Active-site for beta-ketoacyl synthase activity residues include C180, H315, and H355. Residues 549–875 (GFVFTGQGAQ…SSVLMRGEDG (327 aa)) are malonyl-CoA:ACP transacylase (MAT) domain. The For malonyltransferase activity role is filled by S641. An N-terminal hotdog fold region spans residues 940–1074 (HDLLGAPTQD…GLGKIHYRPE (135 aa)). Residues 940 to 1256 (HDLLGAPTQD…CRELPNGNSQ (317 aa)) enclose the PKS/mFAS DH domain. Residues 941–1251 (DLLGAPTQDS…VEGLRCRELP (311 aa)) form a dehydratase (DH) domain region. H972 functions as the Proton acceptor; for dehydratase activity in the catalytic mechanism. The C-terminal hotdog fold stretch occupies residues 1102–1256 (TASISPVDFY…CRELPNGNSQ (155 aa)). The Proton donor; for dehydratase activity role is filled by D1167. The tract at residues 1676–1983 (KLPSDARFTS…VPTGLGKAVL (308 aa)) is enoyl reductase (ER) domain. The interval 2007–2191 (ATYVLAGGLG…AATSVDLGLM (185 aa)) is ketoreductase (KR) domain. A Carrier domain is found at 2303–2380 (QANGIVLEAL…ALAEKISKAS (78 aa)). Position 2340 is an O-(pantetheine 4'-phosphoryl)serine (S2340).

It depends on pantetheine 4'-phosphate as a cofactor.

Highly reducing polyketide synthase; part of a gene cluster that mediates the biosynthesis of a yet unidentified natural product. This chain is Highly reducing polyketide synthase Preu1, found in Preussia isomera (Coprophilous fungus).